Here is a 387-residue protein sequence, read N- to C-terminus: Acyl-CoA dehydrogenase FadE29 (387 aa).

Residues 123-126 (IGYT), Thr-132, and Thr-158 contribute to the FAD site. Catalysis depends on Glu-241, which acts as the Proton acceptor. 367–369 (VNE) lines the FAD pocket.

Belongs to the acyl-CoA dehydrogenase family. Heterotetramer composed of FadE28 and FadE29. FAD is required as a cofactor.

The catalysed reaction is 3-oxochol-4-en-22-oyl-CoA + A = 3-oxochola-4,17-dien-22-oyl-CoA + AH2. The protein operates within steroid metabolism; cholesterol degradation. Its function is as follows. Involved in the third cycle of side chain dehydrogenation in the beta-oxidation of cholesterol catabolism. Contributes partly to the virulence by increasing the efficiency of beta-oxidation. Catalyzes the dehydrogenation of 2'-propanoyl-CoA ester side chains of 3-oxo-4-pregnene-20-carboxyl-CoA (3-OPC-CoA) to yield 3-oxo-4,17-pregnadiene-20-carboxyl-CoA (3-OPDC-CoA). Also able to dehydrogenate steroyl-CoA such as 3-oxo-chol-4-en-24-oyl-CoA (3-OCO-CoA), 1beta-(2'-propanoyl-CoA)-3a-alpha-H- 7a-beta-methylhexahydro-4-indanone (indanone-CoA ester), hexahydroindanone and pregenenone. This Mycobacterium tuberculosis (strain ATCC 25618 / H37Rv) protein is Acyl-CoA dehydrogenase FadE29 (fadE29).